The following is a 224-amino-acid chain: Probable septum site-determining protein MinC (224 aa).

Belongs to the MinC family. As to quaternary structure, interacts with MinD and FtsZ.

Its function is as follows. Cell division inhibitor that blocks the formation of polar Z ring septums. Rapidly oscillates between the poles of the cell to destabilize FtsZ filaments that have formed before they mature into polar Z rings. Prevents FtsZ polymerization. In Shewanella amazonensis (strain ATCC BAA-1098 / SB2B), this protein is Probable septum site-determining protein MinC.